A 403-amino-acid polypeptide reads, in one-letter code: MKAQRRFGLALSWARLTTVFVIDLLILIVASHCPDSWQGENRIAWWVGVGIAVLVTLLSVVTYRGITVTSGITAWLWDWSADPGTALGAGCTPAVDHQRRFGRDTVGVREHHGRLVTVITVDDGEGDAAGRHRHRTTQSAVVPVATVAENLRQFDVQLDGVDIVTVEVRGGAEAARASASLDEWGPEEWGMVGESPAANRRRTWLILRMNPQRNVAAIASRDSLASTLVTATERLAQVLDGQSCAARPLAADELAEVDSAILAELEPTWSRPGWRHLKHFNGYATSFWVTPADINAETLDEVWLSDAPEVGATVLTLRLVMRAGEPRLSAWVRYHSDERLPKELSVGLNRLTGRQLAAVRASLPVPSTRAQLVVSSRELLDHDELELPVGQTQEHATSATTGQ.

2 helical membrane-spanning segments follow: residues 9–29 (LALS…ILIV) and 43–63 (IAWW…VVTY).

The protein belongs to the EccE family. As to quaternary structure, part of the ESX-5 / type VII secretion system (T7SS), which is composed of cytosolic and membrane components. The ESX-5 membrane complex is composed of EccB5, EccC5, EccD5 and EccE5.

The protein resides in the cell inner membrane. In terms of biological role, part of the ESX-5 specialized secretion system, which is responsible for the secretion of EsxN and a number of PE_PGRS and PPE proteins. The polypeptide is ESX-5 secretion system protein EccE5 (Mycobacterium marinum (strain ATCC BAA-535 / M)).